Reading from the N-terminus, the 180-residue chain is MHNLLSRANALLAFTLWVMAAVTAACFLSTVFLDYTVPTKLTVNDVKVRNVVDYATDEQQADLATLNFNLKVDFSKIFNWNVKQLFVYLVAEYKSKVNEVNQVVLWDRIVERADRVVMDEIGVKSKYYFLDDGTNLLNHKNVTFVLRYNVIPNSGYLRLVQSSDQVVVPFPTTYTTTRRS.

The Cytoplasmic segment spans residues 1-12; it reads MHNLLSRANALL. A helical; Signal-anchor for type II membrane protein transmembrane segment spans residues 13-33; it reads AFTLWVMAAVTAACFLSTVFL. The Lumenal portion of the chain corresponds to 34–180; sequence DYTVPTKLTV…PTTYTTTRRS (147 aa). N-linked (GlcNAc...) asparagine glycosylation occurs at Asn-141.

Belongs to the SPCS3 family. In terms of assembly, component of the signal peptidase complex (SPC) composed of a catalytic subunit sec-11 and three accessory subunits spcs-1, spcs-2 and spcs-3. The complex induces a local thinning of the ER membrane which is used to measure the length of the signal peptide (SP) h-region of protein substrates. This ensures the selectivity of the complex towards h-regions shorter than 18-20 amino acids.

The protein localises to the endoplasmic reticulum membrane. Functionally, essential component of the signal peptidase complex (SPC) which catalyzes the cleavage of N-terminal signal sequences from nascent proteins as they are translocated into the lumen of the endoplasmic reticulum. Essential for the SPC catalytic activity, possibly by stabilizing and positioning the active center of the complex close to the lumenal surface. In Caenorhabditis elegans, this protein is Signal peptidase complex subunit 3.